Here is a 163-residue protein sequence, read N- to C-terminus: Cytochrome c-type biogenesis protein CcmE (163 aa).

Topologically, residues 1–8 (MNPRRKKR) are cytoplasmic. A helical; Signal-anchor for type II membrane protein membrane pass occupies residues 9-29 (LTLAVALIVGVAGAASLLLYA). Topologically, residues 30–163 (LNSNLNLFYT…QEGVEKTAQY (134 aa)) are periplasmic. Histidine 131 and tyrosine 135 together coordinate heme.

The protein belongs to the CcmE/CycJ family.

Its subcellular location is the cell inner membrane. Functionally, heme chaperone required for the biogenesis of c-type cytochromes. Transiently binds heme delivered by CcmC and transfers the heme to apo-cytochromes in a process facilitated by CcmF and CcmH. In Shewanella denitrificans (strain OS217 / ATCC BAA-1090 / DSM 15013), this protein is Cytochrome c-type biogenesis protein CcmE.